The primary structure comprises 71 residues: MNKKQLNFEKSLKKLEEIVSEIENADPDLDKALALFAEGAELIKSCLAKLNETKKKIEVIISSGKTEFFKE.

The protein belongs to the XseB family. As to quaternary structure, heterooligomer composed of large and small subunits.

Its subcellular location is the cytoplasm. It carries out the reaction Exonucleolytic cleavage in either 5'- to 3'- or 3'- to 5'-direction to yield nucleoside 5'-phosphates.. Bidirectionally degrades single-stranded DNA into large acid-insoluble oligonucleotides, which are then degraded further into small acid-soluble oligonucleotides. The protein is Exodeoxyribonuclease 7 small subunit of Endomicrobium trichonymphae.